We begin with the raw amino-acid sequence, 355 residues long: MHAALVPTWSSPCPIYTEIPDPGPPPPEQLQLKVLAVGIPRVVRLRARGIHPTAKSASLPYDPSIDGVGIDEQTGIMYYILPLSASCLAEKVNVDRDNLVPLQPGAPKPQPRNGPENGYGIALGDAADHRAETLDPIAIAGLVNPVSSSWMALRTRVDGEITGKTVLVLGATSKSGRAAVLVARFLGANKVIGVARREEGLRSVEGLDGWVTSGDMLPGETGVRFALPDWVGPVHIVLDYVGGSVAAGVLGSAEIEEGRELQYVQVGNLALELGTGEKHMFETLPGHLISRKPICIRGSGMGSFSRRDLVREMPGLVAFLARMKAPFGIASAPMCEVASVWQDEDTKGSRVVIVP.

This sequence belongs to the zinc-containing alcohol dehydrogenase family. The cofactor is NADPH.

The protein operates within secondary metabolite biosynthesis. Its function is as follows. Probable NADPH-dependent quinone reductase; part of the gene cluster that mediates the biosynthesis of terrequinone A, an antitumor agent. The first step in the biosynthetic pathway for terrequinone A is formation of indole pyruvic acid (IPA) from L-tryptophan by the aminotransferase tdiD. The nonribosomal peptide synthase tdiA then immediately converts unstable IPA to didemethylasterriquinone D (DDAQ D), via condensation of 2 IPA molecules. The symmetric connectivity of the 2 IPA molecules is thought to arise by head-to-tail dual Claisen condensations facilitated by the TE domain. TdiB then catalyzes reverse prenylation by transferring dimethylallyl diphosphate to carbon atom 2' of DDAQ D, to yield asterriquinone C-1. Finally, tdiC and tdiE enzymes robustly convert asterriquinone C-1 to terrequinone A via a transformation involving regular prenylation at carbon atom 5, which requires elimination of the hydroxy group on C-5. This Emericella nidulans (strain FGSC A4 / ATCC 38163 / CBS 112.46 / NRRL 194 / M139) (Aspergillus nidulans) protein is Probable NADPH-dependent quinone reductase tdiC.